The chain runs to 284 residues: Neutral protease 2 homolog AFLA_119780 (284 aa).

2 disulfides stabilise this stretch: cysteine 113/cysteine 185 and cysteine 192/cysteine 210. Histidine 235 serves as a coordination point for Zn(2+). Glutamate 236 is an active-site residue. 2 residues coordinate Zn(2+): histidine 239 and aspartate 250.

The protein belongs to the peptidase M35 family. It depends on Zn(2+) as a cofactor.

Its subcellular location is the secreted. The catalysed reaction is Preferential cleavage of bonds with hydrophobic residues in P1'. Also 3-Asn-|-Gln-4 and 8-Gly-|-Ser-9 bonds in insulin B chain.. In terms of biological role, secreted metalloproteinase that allows assimilation of proteinaceous substrates. Shows high activities on basic nuclear substrates such as histone and protamine. The sequence is that of Neutral protease 2 homolog AFLA_119780 from Aspergillus flavus (strain ATCC 200026 / FGSC A1120 / IAM 13836 / NRRL 3357 / JCM 12722 / SRRC 167).